A 346-amino-acid polypeptide reads, in one-letter code: Leucine zipper protein 2 (346 aa).

The first 19 residues, 1–19 (MKFSPAHYLLPLLPALVLS), serve as a signal peptide directing secretion. The stretch at 16–211 (LVLSTRQDYE…QMKAMKETVQ (196 aa)) forms a coiled coil. Asn133 is a glycosylation site (N-linked (GlcNAc...) asparagine). Residues 164 to 192 (LRYGKKDLLFKAQQLTDLEQKLAVAKNEL) form a leucine-zipper region. Positions 225-346 (ALSLITSNPT…GMAAREEKIL (122 aa)) are disordered. Positions 250-261 (AAAKSKPQQSAS) are enriched in low complexity. Residues 262 to 283 (GNNESSQVESTKEGSPSTTACD) are compositionally biased toward polar residues. Asn264 is a glycosylation site (N-linked (GlcNAc...) asparagine). Basic and acidic residues predominate over residues 286 to 298 (DEGRTCSIKHKES). Asn302 carries N-linked (GlcNAc...) asparagine glycosylation.

Its subcellular location is the secreted. The sequence is that of Leucine zipper protein 2 (LUZP2) from Pongo abelii (Sumatran orangutan).